The following is a 320-amino-acid chain: Aspartate carbamoyltransferase catalytic subunit (320 aa).

Residues Arg53 and Thr54 each contribute to the carbamoyl phosphate site. Residue Lys82 participates in L-aspartate binding. Residues Arg103, His131, and Gln134 each contribute to the carbamoyl phosphate site. 2 residues coordinate L-aspartate: Arg164 and Arg227. Residues Leu266 and Pro267 each coordinate carbamoyl phosphate.

The protein belongs to the aspartate/ornithine carbamoyltransferase superfamily. ATCase family. In terms of assembly, heterododecamer (2C3:3R2) of six catalytic PyrB chains organized as two trimers (C3), and six regulatory PyrI chains organized as three dimers (R2).

It carries out the reaction carbamoyl phosphate + L-aspartate = N-carbamoyl-L-aspartate + phosphate + H(+). The protein operates within pyrimidine metabolism; UMP biosynthesis via de novo pathway; (S)-dihydroorotate from bicarbonate: step 2/3. Catalyzes the condensation of carbamoyl phosphate and aspartate to form carbamoyl aspartate and inorganic phosphate, the committed step in the de novo pyrimidine nucleotide biosynthesis pathway. This is Aspartate carbamoyltransferase catalytic subunit from Bifidobacterium longum (strain NCC 2705).